Consider the following 139-residue polypeptide: Small ribosomal subunit protein uS12m (139 aa).

Residues 1–29 (MSWSGPLRGLNTSLTCGPALVPRLWATCS) constitute a mitochondrion transit peptide. A disordered region spans residues 36–56 (MHRLGGPPKRPPQKLGPTEGR).

It belongs to the universal ribosomal protein uS12 family. In terms of assembly, component of the mitochondrial ribosome small subunit (28S) which comprises a 12S rRNA and about 30 distinct proteins.

The protein resides in the mitochondrion. This is Small ribosomal subunit protein uS12m (MRPS12) from Pongo abelii (Sumatran orangutan).